A 437-amino-acid chain; its full sequence is AA9 family lytic polysaccharide monooxygenase H (437 aa).

An N-terminal signal peptide occupies residues 1–21 (MNLSLFTLALVACYSSQLAAA). H22 serves as a coordination point for Cu(2+). A disulfide bridge links C64 with C193. 2 N-linked (GlcNAc...) asparagine glycosylation sites follow: N67 and N79. H104 contacts Cu(2+). N-linked (GlcNAc...) asparagine glycans are attached at residues N120 and N138. H178 and Q188 together coordinate O2. Y190 is a Cu(2+) binding site. N-linked (GlcNAc...) asparagine glycans are attached at residues N252 and N307. One can recognise a Chitin-binding type-1 domain in the interval 392–437 (DGKCGDGNGQTCKGSLLGECCSQVGYCGSSESYCGVGCQGNFGVCG). Disulfide bonds link C395-C412, C403-C418, C411-C425, and C429-C436.

Belongs to the polysaccharide monooxygenase AA9 family. Cu(2+) serves as cofactor.

Its subcellular location is the secreted. It catalyses the reaction [(1-&gt;4)-beta-D-glucosyl]n+m + reduced acceptor + O2 = 4-dehydro-beta-D-glucosyl-[(1-&gt;4)-beta-D-glucosyl]n-1 + [(1-&gt;4)-beta-D-glucosyl]m + acceptor + H2O.. Lytic polysaccharide monooxygenase (LPMO) that depolymerizes crystalline and amorphous polysaccharides via the oxidation of scissile alpha- or beta-(1-4)-glycosidic bonds, yielding C1 and C4 oxidation products. Catalysis by LPMOs requires the reduction of the active-site copper from Cu(II) to Cu(I) by a reducing agent and H(2)O(2) or O(2) as a cosubstrate. The protein is AA9 family lytic polysaccharide monooxygenase H of Botryotinia fuckeliana (strain B05.10) (Noble rot fungus).